We begin with the raw amino-acid sequence, 280 residues long: MTKIKFTKMHGNGNDFIVIDEFENPVPEEKKAAFAKKVCHRRFGIGADGVLFLAKPLHTSLHMRIFNEDGSEAEMCGNGIRCFVKYAVDNGHMNPGKDKVETKAGILEVEARIEDGKTLVKVSMGKPLFDPKKIPAAGLNNFINKPLHGYEVTAVNTGVPHAVIFVDDVNAVDLMKVAPEIRYDLKTFPKGINVNFVQREGHNLRVRTYERGVEGETLSCGTGSVASAAVARYLGYTRDETTVYTAGGQLNISFVSDIAYMEGPAETVYEGEIDVDFSAL.

Substrate-binding residues include asparagine 14 and asparagine 67. Cysteine 76 serves as the catalytic Proton donor. Substrate is bound by residues glycine 77–asparagine 78, asparagine 193, and glutamate 210–arginine 211. Residue cysteine 220 is the Proton acceptor of the active site. Substrate is bound at residue glycine 221–threonine 222.

It belongs to the diaminopimelate epimerase family. As to quaternary structure, homodimer.

It is found in the cytoplasm. The enzyme catalyses (2S,6S)-2,6-diaminopimelate = meso-2,6-diaminopimelate. It functions in the pathway amino-acid biosynthesis; L-lysine biosynthesis via DAP pathway; DL-2,6-diaminopimelate from LL-2,6-diaminopimelate: step 1/1. Its function is as follows. Catalyzes the stereoinversion of LL-2,6-diaminopimelate (L,L-DAP) to meso-diaminopimelate (meso-DAP), a precursor of L-lysine. This chain is Diaminopimelate epimerase, found in Methanocella arvoryzae (strain DSM 22066 / NBRC 105507 / MRE50).